The chain runs to 453 residues: uncharacterized protein (453 aa).

Residues 5–63 enclose the TRAM domain; sequence LLKKNQSVELTIEDLTHDGSGVGKIDGYPLFIPNALPGEKITAKITKLNKNYGFARMEN. Residues C76, C82, C85, and C162 each coordinate [4Fe-4S] cluster. Residues Q285, Y314, E335, and D383 each coordinate S-adenosyl-L-methionine. The active-site Nucleophile is the C410.

Belongs to the class I-like SAM-binding methyltransferase superfamily. RNA M5U methyltransferase family.

This is an uncharacterized protein from Listeria innocua serovar 6a (strain ATCC BAA-680 / CLIP 11262).